We begin with the raw amino-acid sequence, 310 residues long: UDP-N-acetylenolpyruvoylglucosamine reductase (310 aa).

The FAD-binding PCMH-type domain maps to 31-216 (KIGGPADYFV…LRKIEELNQA (186 aa)). Residue Arg-180 is part of the active site. The Proton donor role is filled by Ser-230. Glu-300 is a catalytic residue.

It belongs to the MurB family. The cofactor is FAD.

The protein resides in the cytoplasm. It carries out the reaction UDP-N-acetyl-alpha-D-muramate + NADP(+) = UDP-N-acetyl-3-O-(1-carboxyvinyl)-alpha-D-glucosamine + NADPH + H(+). The protein operates within cell wall biogenesis; peptidoglycan biosynthesis. In terms of biological role, cell wall formation. In Lachnoclostridium phytofermentans (strain ATCC 700394 / DSM 18823 / ISDg) (Clostridium phytofermentans), this protein is UDP-N-acetylenolpyruvoylglucosamine reductase.